The primary structure comprises 292 residues: MPLIPWPASADDSSKGKDDEKDIATKAKELFALAGEIPPEYFSVAAFAAGSLSLAASYFVHKRYFRRIPNAEWVSPNHLARKRWIKGRVTSVGDNDNFRFYHTPGIGWRWPLKFRRVPTLTKELKDQTIHVRIAGVDAPENAHFGRPAQPYAQEALAYLRARILGKTVFCQLIRRDQYGRMVSHVRLAPRFLPATLFRGPNLAEDMLRKGWATTYEQHGAEYGEGGVERYKQIEQEAKDARRGIWAKGVRGETPAEYKRRYAQAADGGEPPSKARAEKEQKRGWLQRLFSWK.

A helical transmembrane segment spans residues 41 to 58 (YFSVAAFAAGSLSLAASY). The region spanning 83–247 (RWIKGRVTSV…KDARRGIWAK (165 aa)) is the TNase-like domain. The active site involves arginine 132. Aspartate 137 serves as a coordination point for Ca(2+). Catalysis depends on residues glutamate 140 and arginine 180. The disordered stretch occupies residues 256–282 (EYKRRYAQAADGGEPPSKARAEKEQKR). Basic and acidic residues predominate over residues 272–282 (SKARAEKEQKR).

Belongs to the LCL3 family.

The protein resides in the mitochondrion. Its subcellular location is the membrane. The sequence is that of Probable endonuclease LCL3 (LCL3) from Schizophyllum commune (strain H4-8 / FGSC 9210) (Split gill fungus).